The sequence spans 284 residues: MEPSPDAPRAGAAEEQPGPSSSASAPAPAASSNEEEGRHQSQAQQQVQEAQPQPLAQQAPAAAGLSRYESQKRRDWNTFLQYLRNHKPPLTLPRCSGAHVIEFLKYLDQFGKTKVHADGCAYFGEPNPPAPCACPLRQAWGSLDALIGRLRAAYEESGGRPESNPFAARAVRIYLREVREAQAKARGIPYEKKRKRGAAAAAAAPPVVVAPPPVVTAPDDATGTSGGAGEDDDDDEATHSGEQQDTTPAASPTTPPATSVGTTTAAATAAAAKGSAAKGSATSS.

The segment at methionine 1–glutamate 69 is disordered. 2 stretches are compositionally biased toward low complexity: residues alanine 13–serine 32 and glutamine 40–alanine 63. The ALOG domain maps to arginine 67–arginine 194. Positions lysine 192–arginine 196 match the Nuclear localization signal motif. Residues valine 209–serine 284 are disordered. Residues threonine 246–serine 284 are compositionally biased toward low complexity.

Belongs to the plant homeotic and developmental regulators ALOG protein family.

The protein localises to the nucleus. Functionally, probable transcription regulator that acts as a developmental regulator by promoting cell growth in response to light. The sequence is that of Protein G1-like9 from Oryza sativa subsp. indica (Rice).